A 378-amino-acid polypeptide reads, in one-letter code: tRNA-specific 2-thiouridylase MnmA (378 aa).

Residues 27-34 (AMSGGVDS) and Leu53 contribute to the ATP site. Cys121 serves as the catalytic Nucleophile. The cysteines at positions 121 and 218 are disulfide-linked. Residue Gly145 participates in ATP binding. The segment at 168-170 (RDQ) is interaction with tRNA. The Cysteine persulfide intermediate role is filled by Cys218.

Belongs to the MnmA/TRMU family.

It localises to the cytoplasm. It catalyses the reaction S-sulfanyl-L-cysteinyl-[protein] + uridine(34) in tRNA + AH2 + ATP = 2-thiouridine(34) in tRNA + L-cysteinyl-[protein] + A + AMP + diphosphate + H(+). In terms of biological role, catalyzes the 2-thiolation of uridine at the wobble position (U34) of tRNA, leading to the formation of s(2)U34. This Rhizorhabdus wittichii (strain DSM 6014 / CCUG 31198 / JCM 15750 / NBRC 105917 / EY 4224 / RW1) (Sphingomonas wittichii) protein is tRNA-specific 2-thiouridylase MnmA.